Reading from the N-terminus, the 1537-residue chain is DNA (cytosine-5)-methyltransferase 1 (1537 aa).

Pro residues predominate over residues 1–13 (MPARSAPPPPALP). 2 disordered regions span residues 1–34 (MPAR…SEKE) and 97–232 (RASN…DEKR). Positions 8 to 105 (PPPALPPALR…SRASNGCAGN (98 aa)) constitute a DMAP1-binding domain. The span at 21-34 (RDLERDEDSLSEKE) shows a compositional bias: basic and acidic residues. Positions 129–154 (SSSSSSSSSSSSSSSSSSSSSLLPAP) are enriched in low complexity. The segment covering 171–194 (SPASSRVTRSSGRQPTILSVFSKG) has biased composition (polar residues). Residues 182 to 194 (GRQPTILSVFSKG) are interaction with PCNA. The segment covering 215–227 (KDEEEEEELEEKE) has biased composition (acidic residues). Zn(2+)-binding residues include Cys-263, Cys-266, and His-329. Ser-420 carries the post-translational modification Phosphoserine. The CXXC-type zinc-finger motif lies at 558 to 604 (NAMKRRRCGVCEVCQQPECGKCKACQNMVKFGGSGRSKQACLQRRCP). Cys-565, Cys-568, Cys-571, Cys-576, Cys-579, Cys-582, Cys-598, and Cys-603 together coordinate Zn(2+). The segment at 614 to 638 (DEEVDDNIPEMPSPKKMLQGRKKKQ) is disordered. BAH domains lie at 667–791 (ETLE…ETPP) and 883–1011 (HYRK…EDPP). The tract at residues 1006-1050 (SFEDPPNHARSSGNKGKGKGKGKGKGKGKSSTTCEQSEPEPTELK) is disordered. A run of 7 repeats spans residues 1020-1021 (KG), 1022-1023 (KG), 1024-1025 (KG), 1026-1027 (KG), 1028-1029 (KG), 1030-1031 (KG), and 1032-1033 (KG). Positions 1020–1035 (KGKGKGKGKGKGKGKS) are 8 X 2 AA tandem repeats of K-G. A compositionally biased stretch (basic residues) spans 1021 to 1033 (GKGKGKGKGKGKG). The stretch at 1034–1035 (KS) is one 8; approximate repeat. The SAM-dependent MTase C5-type domain maps to 1054–1513 (LRTLDVFSGC…LEIRACVGAR (460 aa)). S-adenosyl-L-methionine contacts are provided by residues Ser-1061, 1065–1066 (GL), 1083–1084 (EM), 1105–1106 (DC), and Cys-1106. Cys-1141 is an active-site residue. Residues Asn-1492 and Val-1494 each coordinate S-adenosyl-L-methionine. The disordered stretch occupies residues 1518–1537 (SGAAVAPPAPEKMEMTAAAD).

The protein belongs to the class I-like SAM-binding methyltransferase superfamily. C5-methyltransferase family. Homodimer. Interacts with PCNA. Testis and lung.

Its subcellular location is the nucleus. It carries out the reaction a 2'-deoxycytidine in DNA + S-adenosyl-L-methionine = a 5-methyl-2'-deoxycytidine in DNA + S-adenosyl-L-homocysteine + H(+). Methylates CpG residues. Preferentially methylates hemimethylated DNA. It is responsible for maintaining methylation patterns established in development. Mediates transcriptional repression by direct binding to HDAC2. Plays a role in promoter hypermethylation and transcriptional silencing of tumor suppressor genes (TSGs) or other tumor-related genes. Also required to maintain a transcriptionally repressive state of genes in undifferentiated embryonic stem cells (ESCs). Associates at promoter regions of tumor suppressor genes (TSGs) leading to their gene silencing. This Gallus gallus (Chicken) protein is DNA (cytosine-5)-methyltransferase 1 (DNMT1).